The sequence spans 202 residues: Transcription antitermination protein NusB (202 aa).

The span at 1–11 (MTEERTADNKA) shows a compositional bias: basic and acidic residues. 2 disordered regions span residues 1–21 (MTEERTADNKAAKAASFKRHG) and 169–202 (SAAKRAEQAEQPGQAESDELDGLLDGVVQESDEA).

It belongs to the NusB family.

Its function is as follows. Involved in transcription antitermination. Required for transcription of ribosomal RNA (rRNA) genes. Binds specifically to the boxA antiterminator sequence of the ribosomal RNA (rrn) operons. The polypeptide is Transcription antitermination protein NusB (Corynebacterium jeikeium (strain K411)).